We begin with the raw amino-acid sequence, 244 residues long: CTD nuclear envelope phosphatase 1 (244 aa).

Residues 7 to 29 (LLGLRGFVAFAAKLWSFVLYLLR) form a helical membrane-spanning segment. The FCP1 homology domain occupies 57–224 (SQVKRKVLVL…LNLLPMLDAL (168 aa)).

The protein belongs to the dullard family. As to quaternary structure, interacts with bmpr1a, bmpr1b and bmpr2.

It localises to the membrane. It is found in the cytoplasm. The protein localises to the perinuclear region. The enzyme catalyses O-phospho-L-seryl-[protein] + H2O = L-seryl-[protein] + phosphate. The catalysed reaction is O-phospho-L-threonyl-[protein] + H2O = L-threonyl-[protein] + phosphate. In terms of biological role, serine/threonine protein phosphatase that may dephosphorylate and activate lipins. Lipins are phosphatidate phosphatases that catalyze the conversion of phosphatidic acid to diacylglycerol and control the metabolism of fatty acids at different levels. May indirectly modulate the lipid composition of nuclear and/or endoplasmic reticulum membranes and be required for proper nuclear membrane morphology and/or dynamics. May also indirectly regulate the production of lipid droplets and triacylglycerol. Induces neuronal differentiation by antagonizing BMP signaling. Acts both by dephosphorylating BMPR1A and by promoting BMPR2 proteasomal degradation. The polypeptide is CTD nuclear envelope phosphatase 1 (ctdnep1) (Xenopus tropicalis (Western clawed frog)).